A 428-amino-acid polypeptide reads, in one-letter code: Acetyltransferase sirH (428 aa).

Asn8 carries an N-linked (GlcNAc...) asparagine glycan. 6 helical membrane-spanning segments follow: residues 33–53 (LLTPIFMAVAVLTTLPPPGPL), 55–75 (VIVGLTAFTSLWLHVLTHWVS), 78–98 (AFFMDAIFMISITVRWLLMFV), 305–325 (LYVGFLVSGVQHYACALLIPS), 329–349 (GWGMFWQMPAYAAVVTVEDIL), and 366–386 (FLGYIWTAYWMTLIYALPVGF).

Belongs to the wax synthase family.

It is found in the membrane. It functions in the pathway polyketide biosynthesis. Its function is as follows. Acetyltransferase; part of the gene cluster that mediates the biosynthesis of asperlin, a polyketide showing anti-inflammatory, antitumor and antibiotic activities. The first step of the asperlin biosynthesis is the production of the intermediate 2,4,6-octatrienoic acid by the highly redusing polyketide synthase alnA with cleavage of the PKS product by the esterase alnB. 2,4,6-octatrienoic acid is further converted to asperlin via several steps involving the remaining enzymes from the cluster. The sequence is that of Acetyltransferase sirH from Emericella nidulans (strain FGSC A4 / ATCC 38163 / CBS 112.46 / NRRL 194 / M139) (Aspergillus nidulans).